Reading from the N-terminus, the 415-residue chain is Procollagen C-endopeptidase enhancer 2 (415 aa).

An N-terminal signal peptide occupies residues 1-23 (MRGANAWAPLCLLLAAATQLSRQ). 7 cysteine pairs are disulfide-bonded: C33/C59, C86/C107, C154/C181, C208/C231, C297/C364, C301/C367, and C312/C415. CUB domains lie at 33–144 (CGGI…FSAA) and 154–268 (CGGL…YIFR). Residues 297–415 (CQQKCRRTGT…LLDALKNKQC (119 aa)) form the NTR domain. The N-linked (GlcNAc...) asparagine glycan is linked to N355.

In terms of assembly, interacts with heparin with high affinity, and type I or II collagen. O-glycosylated; contains sialic acid. As to expression, highly expressed in the heart, trabecular meshwork, pituitary gland, bladder, mammary gland, trachea and placenta and weakly expressed in the brain. Expressed in cartilage.

The protein resides in the secreted. Binds to the C-terminal propeptide of types I and II procollagens and may enhance the cleavage of that propeptide by BMP1. The protein is Procollagen C-endopeptidase enhancer 2 (PCOLCE2) of Homo sapiens (Human).